The chain runs to 251 residues: Probable transcriptional regulatory protein Swol_1435 (251 aa).

The segment at 1 to 23 (MAGHSKWANIKHKKARSDEKRGK) is disordered.

This sequence belongs to the TACO1 family.

Its subcellular location is the cytoplasm. The protein is Probable transcriptional regulatory protein Swol_1435 of Syntrophomonas wolfei subsp. wolfei (strain DSM 2245B / Goettingen).